The sequence spans 92 residues: Small ribosomal subunit protein uS19 (92 aa).

Belongs to the universal ribosomal protein uS19 family.

Protein S19 forms a complex with S13 that binds strongly to the 16S ribosomal RNA. This is Small ribosomal subunit protein uS19 from Dinoroseobacter shibae (strain DSM 16493 / NCIMB 14021 / DFL 12).